The primary structure comprises 119 residues: Hisactophilin-3 (119 aa).

Gly-2 carries the N-myristoyl glycine lipid modification. The segment at 8–110 (SHHGHFLSAE…SIYTTHHHHH (103 aa)) is contains several HHXH repeats. Repeat copies occupy residues 34–47 (FHVENHGHHKVAIR) and 75–87 (FHLEHHGGKVSIK). The segment at 34–87 (FHVENHGHHKVAIRTHANKYVSINDNNDVYISHHFHGEHSLFHLEHHGGKVSIK) is 2 X 13 AA approximate repeats.

This sequence belongs to the hisactophilin family. In terms of processing, phosphorylated.

Its subcellular location is the cytoplasm. It localises to the cell membrane. May act as an intracellular pH sensor that links chemotactic signals to responses in the microfilament system of the cells by nucleating actin polymerization or stabilizing the filaments. The chain is Hisactophilin-3 (hatC) from Dictyostelium discoideum (Social amoeba).